A 147-amino-acid polypeptide reads, in one-letter code: Hemoglobin anodic subunit beta (147 aa).

The region spanning 2–147 (EWTDGERTAI…VTSALARQYH (146 aa)) is the Globin domain. Positions 63 and 92 each coordinate heme b.

It belongs to the globin family. Heterotetramer of two alpha chains and two beta chains. Red blood cells.

Its function is as follows. Involved in oxygen transport from gills to the various peripheral tissues. This chain is Hemoglobin anodic subunit beta, found in Gymnothorax unicolor (Brown moray).